We begin with the raw amino-acid sequence, 334 residues long: HTH-type transcriptional regulator RegA (334 aa).

The HTH lacI-type domain occupies 1-57; sequence MAASIKDVAREARVSIATVSRVLNNVDVVNEETKKKVMEAIKKLDYRPNIVARSLKT. Residues 5 to 24 constitute a DNA-binding region (H-T-H motif); sequence IKDVAREARVSIATVSRVLN.

In terms of biological role, involved in the regulation of amylase production. The polypeptide is HTH-type transcriptional regulator RegA (regA) (Clostridium acetobutylicum (strain ATCC 824 / DSM 792 / JCM 1419 / IAM 19013 / LMG 5710 / NBRC 13948 / NRRL B-527 / VKM B-1787 / 2291 / W)).